Consider the following 465-residue polypeptide: UDP-N-acetylmuramoylalanine--D-glutamate ligase (465 aa).

Residue 116–122 (GTNGKTT) coordinates ATP.

The protein belongs to the MurCDEF family.

The protein localises to the cytoplasm. The catalysed reaction is UDP-N-acetyl-alpha-D-muramoyl-L-alanine + D-glutamate + ATP = UDP-N-acetyl-alpha-D-muramoyl-L-alanyl-D-glutamate + ADP + phosphate + H(+). Its pathway is cell wall biogenesis; peptidoglycan biosynthesis. Functionally, cell wall formation. Catalyzes the addition of glutamate to the nucleotide precursor UDP-N-acetylmuramoyl-L-alanine (UMA). This is UDP-N-acetylmuramoylalanine--D-glutamate ligase from Thermobifida fusca (strain YX).